The primary structure comprises 295 residues: Proline-rich proteoglycan 2 (295 aa).

The first 16 residues, 1–16 (MLVVLLTAALLVLSSA), serve as a signal peptide directing secretion. The segment at 16–295 (AQGVDEEVVY…QSSFLWSFSA (280 aa)) is disordered. Residues 26–41 (EDSSQQLELEQQSQGH) show a composition bias toward low complexity. Residues 48–58 (PPPGGLPPRPP) show a composition bias toward pro residues. Residues 62 to 78 (ENGDGDDNDDGDDDGSG) show a composition bias toward acidic residues. Pro residues-rich tracts occupy residues 100 to 187 (PPPA…PPGG) and 194 to 278 (QGPP…PQGP).

Contains glycosaminoglycans of chondroitin-sulfate and heparan types.

Its subcellular location is the secreted. This chain is Proline-rich proteoglycan 2 (Prpg2), found in Rattus norvegicus (Rat).